Consider the following 346-residue polypeptide: Phenylalanine--tRNA ligase alpha subunit (346 aa).

Glu-261 serves as a coordination point for Mg(2+).

Belongs to the class-II aminoacyl-tRNA synthetase family. Phe-tRNA synthetase alpha subunit type 1 subfamily. As to quaternary structure, tetramer of two alpha and two beta subunits. Requires Mg(2+) as cofactor.

The protein localises to the cytoplasm. It catalyses the reaction tRNA(Phe) + L-phenylalanine + ATP = L-phenylalanyl-tRNA(Phe) + AMP + diphosphate + H(+). The protein is Phenylalanine--tRNA ligase alpha subunit of Dehalococcoides mccartyi (strain ATCC BAA-2100 / JCM 16839 / KCTC 5957 / BAV1).